Reading from the N-terminus, the 425-residue chain is Enolase (425 aa).

Gln163 contributes to the (2R)-2-phosphoglycerate binding site. Glu205 (proton donor) is an active-site residue. Mg(2+) is bound by residues Asp242, Glu285, and Asp312. 4 residues coordinate (2R)-2-phosphoglycerate: Lys337, Arg366, Ser367, and Lys388. Residue Lys337 is the Proton acceptor of the active site.

Belongs to the enolase family. Requires Mg(2+) as cofactor.

It is found in the cytoplasm. The protein localises to the secreted. Its subcellular location is the cell surface. It carries out the reaction (2R)-2-phosphoglycerate = phosphoenolpyruvate + H2O. It functions in the pathway carbohydrate degradation; glycolysis; pyruvate from D-glyceraldehyde 3-phosphate: step 4/5. Functionally, catalyzes the reversible conversion of 2-phosphoglycerate (2-PG) into phosphoenolpyruvate (PEP). It is essential for the degradation of carbohydrates via glycolysis. This Jannaschia sp. (strain CCS1) protein is Enolase.